The primary structure comprises 375 residues: Carbamoyl phosphate synthase small chain (375 aa).

The segment at 1 to 186 is CPSase; sequence MKAILALEDG…IVDGTYAWPG (186 aa). Residues serine 45, glycine 238, and glycine 240 each coordinate L-glutamine. The 186-residue stretch at 190-375 folds into the Glutamine amidotransferase type-1 domain; it reads RLVVFDMGIK…RNLVRKETGK (186 aa). Cysteine 265 functions as the Nucleophile in the catalytic mechanism. The L-glutamine site is built by leucine 266, glutamine 269, asparagine 307, glycine 309, and phenylalanine 310. Active-site residues include histidine 348 and glutamate 350.

Belongs to the CarA family. As to quaternary structure, composed of two chains; the small (or glutamine) chain promotes the hydrolysis of glutamine to ammonia, which is used by the large (or ammonia) chain to synthesize carbamoyl phosphate. Tetramer of heterodimers (alpha,beta)4.

The catalysed reaction is hydrogencarbonate + L-glutamine + 2 ATP + H2O = carbamoyl phosphate + L-glutamate + 2 ADP + phosphate + 2 H(+). It carries out the reaction L-glutamine + H2O = L-glutamate + NH4(+). The protein operates within amino-acid biosynthesis; L-arginine biosynthesis; carbamoyl phosphate from bicarbonate: step 1/1. It participates in pyrimidine metabolism; UMP biosynthesis via de novo pathway; (S)-dihydroorotate from bicarbonate: step 1/3. Its function is as follows. Small subunit of the glutamine-dependent carbamoyl phosphate synthetase (CPSase). CPSase catalyzes the formation of carbamoyl phosphate from the ammonia moiety of glutamine, carbonate, and phosphate donated by ATP, constituting the first step of 2 biosynthetic pathways, one leading to arginine and/or urea and the other to pyrimidine nucleotides. The small subunit (glutamine amidotransferase) binds and cleaves glutamine to supply the large subunit with the substrate ammonia. In Solidesulfovibrio magneticus (strain ATCC 700980 / DSM 13731 / RS-1) (Desulfovibrio magneticus), this protein is Carbamoyl phosphate synthase small chain.